We begin with the raw amino-acid sequence, 192 residues long: Holliday junction branch migration complex subunit RuvA (192 aa).

The interval 1–61 (MFEYLKGIVA…DTGITLYGFL (61 aa)) is domain I. The segment at 62–137 (SLEDKELFLK…KLGDYVKKSA (76 aa)) is domain II. The interval 137–140 (AVAT) is flexible linker. The tract at residues 141 to 192 (DLTPSLQDALLALVALGYTQKEVDRITPKLAKLPENTADGYIKEALALLLKK) is domain III.

The protein belongs to the RuvA family. In terms of assembly, homotetramer. Forms an RuvA(8)-RuvB(12)-Holliday junction (HJ) complex. HJ DNA is sandwiched between 2 RuvA tetramers; dsDNA enters through RuvA and exits via RuvB. An RuvB hexamer assembles on each DNA strand where it exits the tetramer. Each RuvB hexamer is contacted by two RuvA subunits (via domain III) on 2 adjacent RuvB subunits; this complex drives branch migration. In the full resolvosome a probable DNA-RuvA(4)-RuvB(12)-RuvC(2) complex forms which resolves the HJ.

It is found in the cytoplasm. In terms of biological role, the RuvA-RuvB-RuvC complex processes Holliday junction (HJ) DNA during genetic recombination and DNA repair, while the RuvA-RuvB complex plays an important role in the rescue of blocked DNA replication forks via replication fork reversal (RFR). RuvA specifically binds to HJ cruciform DNA, conferring on it an open structure. The RuvB hexamer acts as an ATP-dependent pump, pulling dsDNA into and through the RuvAB complex. HJ branch migration allows RuvC to scan DNA until it finds its consensus sequence, where it cleaves and resolves the cruciform DNA. In Lactobacillus gasseri (strain ATCC 33323 / DSM 20243 / BCRC 14619 / CIP 102991 / JCM 1131 / KCTC 3163 / NCIMB 11718 / NCTC 13722 / AM63), this protein is Holliday junction branch migration complex subunit RuvA.